Consider the following 125-residue polypeptide: Basic leucine zipper transcriptional factor ATF-like (125 aa).

Residues 1 to 14 (MPHSSDSSDSSFSR) are compositionally biased toward low complexity. Residues 1–58 (MPHSSDSSDSSFSRSPPPGKQDSSDDVRKVQRREKNRIAAQKSRQRQTQKADTLHLES) form a disordered region. A bZIP domain is found at 26–89 (DVRKVQRREK…KYFTSVLSSH (64 aa)). The segment at 28-50 (RKVQRREKNRIAAQKSRQRQTQK) is basic motif. S43 carries the phosphoserine modification. Position 48 is a phosphothreonine (T48). Residues 54-75 (LHLESEDLEKQNAALRKEIKQL) form a leucine-zipper region.

This sequence belongs to the bZIP family. As to quaternary structure, heterodimer; mainly heterodimerizes with JUNB. The BATF-JUNB heterodimer interacts with IRF4 and IRF8. Interacts (via bZIP domain) with IRF4 and IRF8; the interaction is direct. Also forms heterodimers with JUN and JUND. Interacts with IFI35. In terms of processing, phosphorylated on serine and threonine residues and at least one tyrosine residue. Phosphorylation at Ser-43 inhibit DNA binding activity and transforms it as a negative regulator of AP-1 mediated transcription.

It is found in the nucleus. The protein resides in the cytoplasm. Its function is as follows. AP-1 family transcription factor that controls the differentiation of lineage-specific cells in the immune system: specifically mediates the differentiation of T-helper 17 cells (Th17), follicular T-helper cells (TfH), CD8(+) dendritic cells and class-switch recombination (CSR) in B-cells. Acts via the formation of a heterodimer with JUNB that recognizes and binds DNA sequence 5'-TGA[CG]TCA-3'. The BATF-JUNB heterodimer also forms a complex with IRF4 (or IRF8) in immune cells, leading to recognition of AICE sequence (5'-TGAnTCA/GAAA-3'), an immune-specific regulatory element, followed by cooperative binding of BATF and IRF4 (or IRF8) and activation of genes. Controls differentiation of T-helper cells producing interleukin-17 (Th17 cells) by binding to Th17-associated gene promoters: regulates expression of the transcription factor RORC itself and RORC target genes such as IL17 (IL17A or IL17B). Also involved in differentiation of follicular T-helper cells (TfH) by directing expression of BCL6 and MAF. In B-cells, involved in class-switch recombination (CSR) by controlling the expression of both AICDA and of germline transcripts of the intervening heavy-chain region and constant heavy-chain region (I(H)-C(H)). Following infection, can participate in CD8(+) dendritic cell differentiation via interaction with IRF4 and IRF8 to mediate cooperative gene activation. Regulates effector CD8(+) T-cell differentiation by regulating expression of SIRT1. Following DNA damage, part of a differentiation checkpoint that limits self-renewal of hematopoietic stem cells (HSCs): up-regulated by STAT3, leading to differentiation of HSCs, thereby restricting self-renewal of HSCs. In Bos taurus (Bovine), this protein is Basic leucine zipper transcriptional factor ATF-like (BATF).